We begin with the raw amino-acid sequence, 86 residues long: Translation initiation factor IF-1 3 (86 aa).

An S1-like domain is found at 1–72; the sequence is MAKEELIEMQ…NKGRVTFRHI (72 aa).

This sequence belongs to the IF-1 family. Component of the 30S ribosomal translation pre-initiation complex which assembles on the 30S ribosome in the order IF-2 and IF-3, IF-1 and N-formylmethionyl-tRNA(fMet); mRNA recruitment can occur at any time during PIC assembly.

The protein resides in the cytoplasm. In terms of biological role, one of the essential components for the initiation of protein synthesis. Stabilizes the binding of IF-2 and IF-3 on the 30S subunit to which N-formylmethionyl-tRNA(fMet) subsequently binds. Helps modulate mRNA selection, yielding the 30S pre-initiation complex (PIC). Upon addition of the 50S ribosomal subunit IF-1, IF-2 and IF-3 are released leaving the mature 70S translation initiation complex. This is Translation initiation factor IF-1 3 from Acidovorax sp. (strain JS42).